We begin with the raw amino-acid sequence, 620 residues long: 1-deoxy-D-xylulose-5-phosphate synthase (620 aa).

Residues histidine 80 and 121-123 (GHS) each bind thiamine diphosphate. Aspartate 152 lines the Mg(2+) pocket. Thiamine diphosphate-binding positions include 153–154 (GA), asparagine 181, tyrosine 288, and glutamate 370. Asparagine 181 serves as a coordination point for Mg(2+).

Belongs to the transketolase family. DXPS subfamily. Homodimer. Mg(2+) serves as cofactor. Requires thiamine diphosphate as cofactor.

It carries out the reaction D-glyceraldehyde 3-phosphate + pyruvate + H(+) = 1-deoxy-D-xylulose 5-phosphate + CO2. Its pathway is metabolic intermediate biosynthesis; 1-deoxy-D-xylulose 5-phosphate biosynthesis; 1-deoxy-D-xylulose 5-phosphate from D-glyceraldehyde 3-phosphate and pyruvate: step 1/1. Catalyzes the acyloin condensation reaction between C atoms 2 and 3 of pyruvate and glyceraldehyde 3-phosphate to yield 1-deoxy-D-xylulose-5-phosphate (DXP). The chain is 1-deoxy-D-xylulose-5-phosphate synthase from Shigella sonnei (strain Ss046).